Here is a 216-residue protein sequence, read N- to C-terminus: Endo-1,4-beta-xylanase 1 (216 aa).

An N-terminal signal peptide occupies residues 1–19; the sequence is MFLTSVVSLVVGAISCVSA. The 188-residue stretch at 29-216 folds into the GH11 domain; sequence QMTPRNSCYG…SSGSASITVS (188 aa). The active-site Nucleophile is the glutamate 112. The Proton donor role is filled by glutamate 203.

This sequence belongs to the glycosyl hydrolase 11 (cellulase G) family.

It is found in the secreted. It catalyses the reaction Endohydrolysis of (1-&gt;4)-beta-D-xylosidic linkages in xylans.. It functions in the pathway glycan degradation; xylan degradation. Its function is as follows. Endo-1,4-beta-xylanase involved in the hydrolysis of xylan, a major structural heterogeneous polysaccharide found in plant biomass representing the second most abundant polysaccharide in the biosphere, after cellulose. The protein is Endo-1,4-beta-xylanase 1 (xyl1) of Claviceps purpurea (Ergot fungus).